Consider the following 85-residue polypeptide: Conotoxin Im28.1 (85 aa).

The signal sequence occupies residues 1–21 (MPKLEMMLLVLLILPLCYIDA). Residues 22–40 (VGPPPPWNMEDEIIEHWQK) constitute a propeptide that is removed on maturation.

The protein belongs to the conotoxin D superfamily. In terms of processing, contains 5 disulfide bonds. As to expression, expressed by the venom duct.

Its subcellular location is the secreted. Probable neurotoxin. The sequence is that of Conotoxin Im28.1 from Conus imperialis (Imperial cone).